Here is a 630-residue protein sequence, read N- to C-terminus: Cyclin-T1-2 (630 aa).

A compositionally biased stretch (low complexity) spans 288–297; that stretch reads QSSLSVSSSS. Disordered stretches follow at residues 288–313 and 410–439; these read QSSLSVSSSSPEIGDPNDHLQVDSSQ and RSGDKTKLCSEGGSSLTDVDSKSTQSVEPP. The span at 421–439 shows a compositional bias: polar residues; the sequence is GGSSLTDVDSKSTQSVEPP.

It belongs to the cyclin family. Cyclin T subfamily.

This chain is Cyclin-T1-2 (CYCT1_2), found in Oryza sativa subsp. japonica (Rice).